A 237-amino-acid polypeptide reads, in one-letter code: CDP-diacylglycerol--serine O-phosphatidyltransferase (237 aa).

8 helical membrane-spanning segments follow: residues 3 to 23 (INPL…LGMM), 25 to 45 (IFYA…ASLI), 73 to 93 (VIAF…YNFG), 95 to 115 (IGMA…ARFN), 124 to 144 (YSFI…CVLL), 150 to 170 (FLEG…GVLM), 184 to 204 (WNLK…VRPL), and 207 to 227 (LSVF…FLMV).

The protein belongs to the CDP-alcohol phosphatidyltransferase class-I family.

It is found in the cell membrane. The catalysed reaction is a CDP-1,2-diacyl-sn-glycerol + L-serine = a 1,2-diacyl-sn-glycero-3-phospho-L-serine + CMP + H(+). The polypeptide is CDP-diacylglycerol--serine O-phosphatidyltransferase (pssA) (Helicobacter pylori (strain ATCC 700392 / 26695) (Campylobacter pylori)).